We begin with the raw amino-acid sequence, 166 residues long: Ribosome-binding factor A (166 aa).

The disordered stretch occupies residues 122-166; it reads HVADETDVEDSTDHEDDVTNSEDETKHVDIDTDSEEGTNTDGKAQ. Over residues 126–143 the composition is skewed to acidic residues; it reads ETDVEDSTDHEDDVTNSE.

This sequence belongs to the RbfA family. Monomer. Binds 30S ribosomal subunits, but not 50S ribosomal subunits or 70S ribosomes.

The protein localises to the cytoplasm. Its function is as follows. One of several proteins that assist in the late maturation steps of the functional core of the 30S ribosomal subunit. Associates with free 30S ribosomal subunits (but not with 30S subunits that are part of 70S ribosomes or polysomes). Required for efficient processing of 16S rRNA. May interact with the 5'-terminal helix region of 16S rRNA. The polypeptide is Ribosome-binding factor A (Pseudoalteromonas translucida (strain TAC 125)).